A 470-amino-acid polypeptide reads, in one-letter code: Cysteine--tRNA ligase (470 aa).

Residue cysteine 27 coordinates Zn(2+). Positions 29–39 (PTVYNFFHIGN) match the 'HIGH' region motif. Residues cysteine 211, histidine 236, and glutamate 240 each contribute to the Zn(2+) site. Positions 268–272 (KMSKS) match the 'KMSKS' region motif. Lysine 271 provides a ligand contact to ATP.

This sequence belongs to the class-I aminoacyl-tRNA synthetase family. As to quaternary structure, monomer. It depends on Zn(2+) as a cofactor.

The protein localises to the cytoplasm. The enzyme catalyses tRNA(Cys) + L-cysteine + ATP = L-cysteinyl-tRNA(Cys) + AMP + diphosphate. This Clostridium botulinum (strain Alaska E43 / Type E3) protein is Cysteine--tRNA ligase.